A 238-amino-acid polypeptide reads, in one-letter code: UPF0280 protein Mboo_1274 (238 aa).

The protein belongs to the UPF0280 family.

The polypeptide is UPF0280 protein Mboo_1274 (Methanoregula boonei (strain DSM 21154 / JCM 14090 / 6A8)).